Consider the following 80-residue polypeptide: Large ribosomal subunit protein uL24 (80 aa).

The protein belongs to the universal ribosomal protein uL24 family. In terms of assembly, part of the 50S ribosomal subunit.

Functionally, one of two assembly initiator proteins, it binds directly to the 5'-end of the 23S rRNA, where it nucleates assembly of the 50S subunit. In terms of biological role, one of the proteins that surrounds the polypeptide exit tunnel on the outside of the subunit. This chain is Large ribosomal subunit protein uL24, found in Prosthecochloris aestuarii (strain DSM 271 / SK 413).